Here is an 81-residue protein sequence, read N- to C-terminus: Large ribosomal subunit protein bL31B (81 aa).

Belongs to the bacterial ribosomal protein bL31 family. Type B subfamily. As to quaternary structure, part of the 50S ribosomal subunit.

The sequence is that of Large ribosomal subunit protein bL31B from Borreliella afzelii (strain PKo) (Borrelia afzelii).